The following is a 494-amino-acid chain: Protein translocase subunit SecD (494 aa).

Helical transmembrane passes span Trp-7–Phe-27, Leu-322–Leu-342, Phe-345–Ile-365, Pro-372–Phe-392, Ile-420–Gly-440, and Phe-441–Leu-461.

The protein belongs to the SecD/SecF family. SecD subfamily. In terms of assembly, forms a complex with SecF. Part of the essential Sec protein translocation apparatus which comprises SecA, SecYEG and auxiliary proteins SecDF. Other proteins may also be involved.

The protein resides in the cell inner membrane. Functionally, part of the Sec protein translocase complex. Interacts with the SecYEG preprotein conducting channel. SecDF uses the proton motive force (PMF) to complete protein translocation after the ATP-dependent function of SecA. In terms of biological role, probably participates in protein translocation into and across both the cytoplasmic and thylakoid membranes in cyanobacterial cells. The protein is Protein translocase subunit SecD of Prochlorococcus marinus (strain SARG / CCMP1375 / SS120).